Reading from the N-terminus, the 163-residue chain is Large ribosomal subunit protein uL10 (163 aa).

This sequence belongs to the universal ribosomal protein uL10 family. As to quaternary structure, part of the ribosomal stalk of the 50S ribosomal subunit. The N-terminus interacts with L11 and the large rRNA to form the base of the stalk. The C-terminus forms an elongated spine to which L12 dimers bind in a sequential fashion forming a multimeric L10(L12)X complex.

Its function is as follows. Forms part of the ribosomal stalk, playing a central role in the interaction of the ribosome with GTP-bound translation factors. This is Large ribosomal subunit protein uL10 from Haemophilus influenzae (strain PittEE).